Reading from the N-terminus, the 165-residue chain is AP-3 complex subunit sigma (165 aa).

This sequence belongs to the adaptor complexes small subunit family. Adaptor protein complex 3 (AP-3) is a heterotetramer composed of 2 large adaptins (apl5 and apl6), a medium adaptin (apm3) and a small adaptin (aps3).

It localises to the golgi apparatus. Its subcellular location is the cytoplasmic vesicle membrane. Functionally, part of the AP-3 complex, an adaptor-related complex which is not clathrin-associated. The complex is associated with the Golgi region as well as more peripheral structures. It facilitates the budding of vesicles from the Golgi membrane and may be directly involved in trafficking to the vacuole. The polypeptide is AP-3 complex subunit sigma (aps3) (Schizosaccharomyces pombe (strain 972 / ATCC 24843) (Fission yeast)).